Consider the following 175-residue polypeptide: Ribosome maturation factor RimM (175 aa).

Residues 96-175 (EEDFYWRDLI…LIQVNWEPDF (80 aa)) enclose the PRC barrel domain.

Belongs to the RimM family. In terms of assembly, binds ribosomal protein uS19.

It is found in the cytoplasm. An accessory protein needed during the final step in the assembly of 30S ribosomal subunit, possibly for assembly of the head region. Essential for efficient processing of 16S rRNA. May be needed both before and after RbfA during the maturation of 16S rRNA. It has affinity for free ribosomal 30S subunits but not for 70S ribosomes. The protein is Ribosome maturation factor RimM of Psychromonas ingrahamii (strain DSM 17664 / CCUG 51855 / 37).